The primary structure comprises 282 residues: UDP-3-O-acyl-N-acetylglucosamine deacetylase (282 aa).

The Zn(2+) site is built by H80, H240, and D244. H267 serves as the catalytic Proton donor.

This sequence belongs to the LpxC family. Zn(2+) is required as a cofactor.

The protein resides in the plastid. Its subcellular location is the chloroplast. It carries out the reaction a UDP-3-O-[(3R)-3-hydroxyacyl]-N-acetyl-alpha-D-glucosamine + H2O = a UDP-3-O-[(3R)-3-hydroxyacyl]-alpha-D-glucosamine + acetate. Its pathway is glycolipid biosynthesis; lipid IV(A) biosynthesis; lipid IV(A) from (3R)-3-hydroxytetradecanoyl-[acyl-carrier-protein] and UDP-N-acetyl-alpha-D-glucosamine: step 2/6. Functionally, catalyzes the hydrolysis of UDP-3-O-myristoyl-N-acetylglucosamine to form UDP-3-O-myristoylglucosamine and acetate. Involved in the biosynthesis of lipid A, a phosphorylated glycolipid that in bacteria anchors the lipopolysaccharide to the outer membrane of the cell. The target for the lipopolysaccharides produced in the chloroplast could either be the cell envelope of the eukaryote or the plastid membrane. The chain is UDP-3-O-acyl-N-acetylglucosamine deacetylase from Cyanidium caldarium (Red alga).